A 122-amino-acid chain; its full sequence is Large ribosomal subunit protein uL14 (122 aa).

The protein belongs to the universal ribosomal protein uL14 family. In terms of assembly, part of the 50S ribosomal subunit. Forms a cluster with proteins L3 and L19. In the 70S ribosome, L14 and L19 interact and together make contacts with the 16S rRNA in bridges B5 and B8.

Its function is as follows. Binds to 23S rRNA. Forms part of two intersubunit bridges in the 70S ribosome. This is Large ribosomal subunit protein uL14 from Pelagibacter ubique (strain HTCC1062).